The following is a 266-amino-acid chain: Hemin import ATP-binding protein HmuV (266 aa).

The region spanning leucine 12–aspartate 248 is the ABC transporter domain. ATP is bound at residue glycine 44–serine 51.

It belongs to the ABC transporter superfamily. Heme (hemin) importer (TC 3.A.1.14.5) family. In terms of assembly, the complex is composed of two ATP-binding proteins (HmuV), two transmembrane proteins (HmuU) and a solute-binding protein (HmuT).

The protein resides in the cell inner membrane. Its function is as follows. Part of the ABC transporter complex HmuTUV involved in hemin import. Responsible for energy coupling to the transport system. This is Hemin import ATP-binding protein HmuV from Yersinia enterocolitica.